A 132-amino-acid chain; its full sequence is MVRPLKPSQIRRLVRRPGIRKHRNSLRYKMRIKQGDTVQVISGDDKGKIGEVLRVFPERNMVLVEGVNIVTYHRKPQREGESGRIETKEAPIPVCKVMAYSKKQEVASRIGYQITADGRKVRVLKKTGEILD.

The protein belongs to the universal ribosomal protein uL24 family. Part of the 50S ribosomal subunit.

Functionally, one of two assembly initiator proteins, it binds directly to the 5'-end of the 23S rRNA, where it nucleates assembly of the 50S subunit. One of the proteins that surrounds the polypeptide exit tunnel on the outside of the subunit. The sequence is that of Large ribosomal subunit protein uL24 from Synechococcus sp. (strain JA-2-3B'a(2-13)) (Cyanobacteria bacterium Yellowstone B-Prime).